Here is a 314-residue protein sequence, read N- to C-terminus: Secreted frizzled-related protein 1 (314 aa).

Positions 1-31 (MGIGRSEGGRRGAALGVLLALGAALLAVGSA) are cleaved as a signal peptide. The 117-residue stretch at 53–169 (TKPPQCVDIP…FPEGDVCIAM (117 aa)) folds into the FZ domain. 5 cysteine pairs are disulfide-bonded: Cys-58/Cys-121, Cys-68/Cys-114, Cys-105/Cys-140, Cys-129/Cys-166, and Cys-133/Cys-157. An N-linked (GlcNAc...) asparagine glycan is attached at Asn-173. Cystine bridges form between Cys-186–Cys-256, Cys-189–Cys-258, and Cys-203–Cys-306. In terms of domain architecture, NTR spans 186 to 306 (CPPCDNELKS…FMKKMKNHEC (121 aa)).

This sequence belongs to the secreted frizzled-related protein (sFRP) family. As to quaternary structure, interacts with WNT1, WNT2 and FRZD6. Interacts with WNT4, WNT8 and MYOC. As to expression, widely expressed. Absent from lung, liver and peripheral blood leukocytes. Highest levels in heart and fetal kidney. Also expressed in testis, ovary, fetal brain and lung, leiomyomal cells, myometrial cells and vascular smooth muscle cells. Expressed in foreskin fibroblasts and in keratinocytes.

It is found in the secreted. Functionally, soluble frizzled-related proteins (sFRPS) function as modulators of Wnt signaling through direct interaction with Wnts. They have a role in regulating cell growth and differentiation in specific cell types. SFRP1 decreases intracellular beta-catenin levels. Has antiproliferative effects on vascular cells, in vitro and in vivo, and can induce, in vivo, an angiogenic response. In vascular cell cycle, delays the G1 phase and entry into the S phase. In kidney development, inhibits tubule formation and bud growth in metanephroi. Inhibits WNT1/WNT4-mediated TCF-dependent transcription. The sequence is that of Secreted frizzled-related protein 1 (SFRP1) from Homo sapiens (Human).